Reading from the N-terminus, the 418-residue chain is Tyrosine--tRNA ligase (418 aa).

Residue tyrosine 34 coordinates L-tyrosine. The 'HIGH' region motif lies at proline 39 to histidine 48. L-tyrosine contacts are provided by tyrosine 169 and glutamine 173. The 'KMSKS' region motif lies at lysine 229–serine 233. Lysine 232 provides a ligand contact to ATP. Positions leucine 352–tyrosine 418 constitute an S4 RNA-binding domain.

The protein belongs to the class-I aminoacyl-tRNA synthetase family. TyrS type 1 subfamily. As to quaternary structure, homodimer.

It localises to the cytoplasm. The enzyme catalyses tRNA(Tyr) + L-tyrosine + ATP = L-tyrosyl-tRNA(Tyr) + AMP + diphosphate + H(+). In terms of biological role, catalyzes the attachment of tyrosine to tRNA(Tyr) in a two-step reaction: tyrosine is first activated by ATP to form Tyr-AMP and then transferred to the acceptor end of tRNA(Tyr). This chain is Tyrosine--tRNA ligase, found in Streptococcus pyogenes serotype M28 (strain MGAS6180).